Here is a 499-residue protein sequence, read N- to C-terminus: NADH-quinone oxidoreductase subunit N (499 aa).

A run of 14 helical transmembrane segments spans residues 16–36 (AAFS…LDAF), 42–62 (AIPW…ITHL), 77–97 (GGFV…TILL), 109–129 (YGEV…LGSA), 133–153 (VSIF…TGFI), 167–187 (FLLG…MYGA), 208–228 (LLFW…VSAA), 252–272 (ATKA…VPGG), 274–294 (WQLS…VMAL), 302–322 (LLAY…SAGT), 327–347 (AGAL…FGVM), 376–396 (GSTM…GGFI), 411–433 (TWLV…RVVY), and 463–483 (GTLV…GGVL).

The protein belongs to the complex I subunit 2 family. In terms of assembly, NDH-1 is composed of 14 different subunits. Subunits NuoA, H, J, K, L, M, N constitute the membrane sector of the complex.

It localises to the cell inner membrane. It catalyses the reaction a quinone + NADH + 5 H(+)(in) = a quinol + NAD(+) + 4 H(+)(out). Functionally, NDH-1 shuttles electrons from NADH, via FMN and iron-sulfur (Fe-S) centers, to quinones in the respiratory chain. The immediate electron acceptor for the enzyme in this species is believed to be a menaquinone. Couples the redox reaction to proton translocation (for every two electrons transferred, four hydrogen ions are translocated across the cytoplasmic membrane), and thus conserves the redox energy in a proton gradient. The protein is NADH-quinone oxidoreductase subunit N of Salinibacter ruber (strain DSM 13855 / M31).